A 323-amino-acid chain; its full sequence is Dehydrogenase/reductase SDR family member 7B (323 aa).

Over 1–4 the chain is Cytoplasmic; that stretch reads MDLT. The chain crosses the membrane as a helical; Signal-anchor for type II membrane protein span at residues 5 to 25; sequence SWAIFPLLLASIGVYGLYKLL. The Lumenal segment spans residues 26-272; the sequence is QKLRSGAYLQ…AVGERRKELL (247 aa). Residues Ser-46 and Leu-48 each coordinate NAD(+). Ser-178 is a binding site for substrate. NAD(+)-binding residues include Tyr-191, Lys-195, and Thr-226. Residue Tyr-191 is the Proton acceptor of the active site.

The protein belongs to the short-chain dehydrogenases/reductases (SDR) family.

Its subcellular location is the endoplasmic reticulum membrane. In terms of biological role, putative oxidoreductase. In Xenopus laevis (African clawed frog), this protein is Dehydrogenase/reductase SDR family member 7B (dhrs7b).